The following is a 314-amino-acid chain: Acetaldehyde dehydrogenase 3 (314 aa).

C132 functions as the Acyl-thioester intermediate in the catalytic mechanism. Residues 163-171 (SAGPGTRAN) and N291 each bind NAD(+).

This sequence belongs to the acetaldehyde dehydrogenase family.

It catalyses the reaction acetaldehyde + NAD(+) + CoA = acetyl-CoA + NADH + H(+). The sequence is that of Acetaldehyde dehydrogenase 3 from Dechloromonas aromatica (strain RCB).